Reading from the N-terminus, the 101-residue chain is MMFEHVLFLSVYLFSIGIYGLITSRNMVRALICLELILNSINLNLVTFSDLFDSRQLKGDIFAIFVIALAAAEAAIGLSILSSIHRNRKSTRINQSNLLNN.

3 consecutive transmembrane segments (helical) span residues 2-22, 32-52, and 61-81; these read MFEH…YGLI, ICLE…SDLF, and IFAI…LSIL.

It belongs to the complex I subunit 4L family. In terms of assembly, NDH is composed of at least 16 different subunits, 5 of which are encoded in the nucleus.

The protein resides in the plastid. It localises to the chloroplast thylakoid membrane. It catalyses the reaction a plastoquinone + NADH + (n+1) H(+)(in) = a plastoquinol + NAD(+) + n H(+)(out). It carries out the reaction a plastoquinone + NADPH + (n+1) H(+)(in) = a plastoquinol + NADP(+) + n H(+)(out). NDH shuttles electrons from NAD(P)H:plastoquinone, via FMN and iron-sulfur (Fe-S) centers, to quinones in the photosynthetic chain and possibly in a chloroplast respiratory chain. The immediate electron acceptor for the enzyme in this species is believed to be plastoquinone. Couples the redox reaction to proton translocation, and thus conserves the redox energy in a proton gradient. The polypeptide is NAD(P)H-quinone oxidoreductase subunit 4L, chloroplastic (Agrostis stolonifera (Creeping bentgrass)).